We begin with the raw amino-acid sequence, 287 residues long: 4-hydroxybenzoate octaprenyltransferase (287 aa).

The next 7 membrane-spanning stretches (helical) occupy residues 30–50 (ALWI…FALG), 92–112 (IAIA…LNGL), 133–153 (FFAI…PMAF), 158–178 (DTVP…SVAY), 207–227 (VLAI…LGAA), 232–252 (WPYW…YTLI), and 266–286 (HNNW…ALAV).

It belongs to the UbiA prenyltransferase family. Mg(2+) serves as cofactor.

It is found in the cell inner membrane. It catalyses the reaction all-trans-octaprenyl diphosphate + 4-hydroxybenzoate = 4-hydroxy-3-(all-trans-octaprenyl)benzoate + diphosphate. The protein operates within cofactor biosynthesis; ubiquinone biosynthesis. Functionally, catalyzes the prenylation of para-hydroxybenzoate (PHB) with an all-trans polyprenyl group. Mediates the second step in the final reaction sequence of ubiquinone-8 (UQ-8) biosynthesis, which is the condensation of the polyisoprenoid side chain with PHB, generating the first membrane-bound Q intermediate 3-octaprenyl-4-hydroxybenzoate. This Burkholderia mallei (strain NCTC 10247) protein is 4-hydroxybenzoate octaprenyltransferase.